The chain runs to 335 residues: Probable pectinesterase 29 (335 aa).

An N-terminal signal peptide occupies residues 1-24; that stretch reads MGTHRIFIGLIALCCFCLPHLIEA. N-linked (GlcNAc...) asparagine glycosylation is present at Asn-43. Residue Asp-166 is the Proton donor of the active site. The Nucleophile role is filled by Asp-187. 2 residues coordinate substrate: Arg-248 and Trp-250. N-linked (GlcNAc...) asparagine glycosylation occurs at Asn-262.

The protein belongs to the pectinesterase family. Expressed in flower buds.

It localises to the secreted. The protein localises to the cell wall. It catalyses the reaction [(1-&gt;4)-alpha-D-galacturonosyl methyl ester](n) + n H2O = [(1-&gt;4)-alpha-D-galacturonosyl](n) + n methanol + n H(+). It participates in glycan metabolism; pectin degradation; 2-dehydro-3-deoxy-D-gluconate from pectin: step 1/5. Acts in the modification of cell walls via demethylesterification of cell wall pectin. The polypeptide is Probable pectinesterase 29 (PME29) (Arabidopsis thaliana (Mouse-ear cress)).